Reading from the N-terminus, the 460-residue chain is Elongation factor 1-alpha (460 aa).

Gly-2 is subject to N,N,N-trimethylglycine. An N6,N6-dimethyllysine; alternate modification is found at Lys-3. Lys-3 is subject to N6-methyllysine; alternate. The region spanning 6 to 241 (KAHINVVVIG…DAIEQPKRPT (236 aa)) is the tr-type G domain. The segment at 15–22 (GHVDSGKS) is G1. 15-22 (GHVDSGKS) provides a ligand contact to GTP. Position 31 is an N6-methyllysine (Lys-31). Residues 71-75 (GITID) are G2. The residue at position 80 (Lys-80) is an N6,N6,N6-trimethyllysine. The interval 92-95 (DAPG) is G3. Residues 92-96 (DAPGH) and 154-157 (NKMD) contribute to the GTP site. The interval 154-157 (NKMD) is G4. Residues 193–195 (SGF) form a G5 region. Lys-317 is subject to N6,N6-dimethyllysine; alternate. Lys-317 bears the N6-methyllysine; alternate mark. Lys-391 is subject to N6-methyllysine.

The protein belongs to the TRAFAC class translation factor GTPase superfamily. Classic translation factor GTPase family. EF-Tu/EF-1A subfamily.

It is found in the cytoplasm. Its function is as follows. This protein promotes the GTP-dependent binding of aminoacyl-tRNA to the A-site of ribosomes during protein biosynthesis. The protein is Elongation factor 1-alpha (TEF) of Sordaria macrospora.